We begin with the raw amino-acid sequence, 307 residues long: Probable GTP 3',8-cyclase (307 aa).

The Radical SAM core domain occupies 5-231; it reads RFGRPVTNLR…MHRRKKYFIP (227 aa). R14 serves as a coordination point for GTP. The [4Fe-4S] cluster site is built by C21, C25, and C28. GTP is bound at residue K62. An S-adenosyl-L-methionine-binding site is contributed by G66. T91 serves as a coordination point for GTP. S115 is an S-adenosyl-L-methionine binding site. K151 is a GTP binding site. M190 contributes to the S-adenosyl-L-methionine binding site. [4Fe-4S] cluster is bound by residues C251 and C254. 256-258 serves as a coordination point for GTP; sequence RLR. Residue C268 participates in [4Fe-4S] cluster binding.

It belongs to the radical SAM superfamily. MoaA family. [4Fe-4S] cluster is required as a cofactor.

The catalysed reaction is GTP + AH2 + S-adenosyl-L-methionine = (8S)-3',8-cyclo-7,8-dihydroguanosine 5'-triphosphate + 5'-deoxyadenosine + L-methionine + A + H(+). The protein operates within cofactor biosynthesis; molybdopterin biosynthesis. Its function is as follows. Catalyzes the cyclization of GTP to (8S)-3',8-cyclo-7,8-dihydroguanosine 5'-triphosphate. This Thermococcus kodakarensis (strain ATCC BAA-918 / JCM 12380 / KOD1) (Pyrococcus kodakaraensis (strain KOD1)) protein is Probable GTP 3',8-cyclase.